The sequence spans 779 residues: Phosphoribosylformylglycinamidine synthase subunit PurL (779 aa).

Residue histidine 52 is part of the active site. Residues tyrosine 55 and lysine 94 each coordinate ATP. A Mg(2+)-binding site is contributed by glutamate 96. Substrate-binding positions include 97-100 and arginine 119; that span reads SHNH. Histidine 98 functions as the Proton acceptor in the catalytic mechanism. Aspartate 120 lines the Mg(2+) pocket. Glutamine 243 contributes to the substrate binding site. Aspartate 271 serves as a coordination point for Mg(2+). 315–317 contributes to the substrate binding site; that stretch reads ESQ. 2 residues coordinate ATP: asparagine 523 and glycine 560. A Mg(2+)-binding site is contributed by asparagine 561. Serine 563 contacts substrate.

The protein belongs to the FGAMS family. As to quaternary structure, monomer. Part of the FGAM synthase complex composed of 1 PurL, 1 PurQ and 2 PurS subunits.

The protein localises to the cytoplasm. It carries out the reaction N(2)-formyl-N(1)-(5-phospho-beta-D-ribosyl)glycinamide + L-glutamine + ATP + H2O = 2-formamido-N(1)-(5-O-phospho-beta-D-ribosyl)acetamidine + L-glutamate + ADP + phosphate + H(+). It participates in purine metabolism; IMP biosynthesis via de novo pathway; 5-amino-1-(5-phospho-D-ribosyl)imidazole from N(2)-formyl-N(1)-(5-phospho-D-ribosyl)glycinamide: step 1/2. Functionally, part of the phosphoribosylformylglycinamidine synthase complex involved in the purines biosynthetic pathway. Catalyzes the ATP-dependent conversion of formylglycinamide ribonucleotide (FGAR) and glutamine to yield formylglycinamidine ribonucleotide (FGAM) and glutamate. The FGAM synthase complex is composed of three subunits. PurQ produces an ammonia molecule by converting glutamine to glutamate. PurL transfers the ammonia molecule to FGAR to form FGAM in an ATP-dependent manner. PurS interacts with PurQ and PurL and is thought to assist in the transfer of the ammonia molecule from PurQ to PurL. This chain is Phosphoribosylformylglycinamidine synthase subunit PurL, found in Prochlorococcus marinus (strain MIT 9515).